A 142-amino-acid polypeptide reads, in one-letter code: Small ribosomal subunit protein uS12 (142 aa).

The tract at residues 1 to 44 (MTNGKYAARKLKKDRQQRRWSDSEYARRERGLGKKSDPLEGAPQ) is disordered. Basic residues predominate over residues 7–16 (AARKLKKDRQ). Positions 17 to 38 (QRRWSDSEYARRERGLGKKSDP) are enriched in basic and acidic residues.

This sequence belongs to the universal ribosomal protein uS12 family. As to quaternary structure, part of the 30S ribosomal subunit.

Functionally, with S4 and S5 plays an important role in translational accuracy. Located at the interface of the 30S and 50S subunits. This is Small ribosomal subunit protein uS12 from Halobacterium salinarum (strain ATCC 29341 / DSM 671 / R1).